The sequence spans 344 residues: GTP 3',8-cyclase (344 aa).

The region spanning 19-245 (PFGRAVTYLR…DIPYRTGGPA (227 aa)) is the Radical SAM core domain. A GTP-binding site is contributed by R28. Residues C35 and C39 each contribute to the [4Fe-4S] cluster site. Residue Y41 coordinates S-adenosyl-L-methionine. C42 lines the [4Fe-4S] cluster pocket. R77 lines the GTP pocket. Residue G81 participates in S-adenosyl-L-methionine binding. Position 111 (T111) interacts with GTP. S135 lines the S-adenosyl-L-methionine pocket. K171 serves as a coordination point for GTP. Position 205 (M205) interacts with S-adenosyl-L-methionine. [4Fe-4S] cluster contacts are provided by C268 and C271. Residue 273 to 275 (RVR) coordinates GTP. C285 is a [4Fe-4S] cluster binding site.

The protein belongs to the radical SAM superfamily. MoaA family. As to quaternary structure, monomer and homodimer. The cofactor is [4Fe-4S] cluster.

The enzyme catalyses GTP + AH2 + S-adenosyl-L-methionine = (8S)-3',8-cyclo-7,8-dihydroguanosine 5'-triphosphate + 5'-deoxyadenosine + L-methionine + A + H(+). Its pathway is cofactor biosynthesis; molybdopterin biosynthesis. Functionally, catalyzes the cyclization of GTP to (8S)-3',8-cyclo-7,8-dihydroguanosine 5'-triphosphate. In Brucella melitensis biotype 2 (strain ATCC 23457), this protein is GTP 3',8-cyclase.